A 279-amino-acid polypeptide reads, in one-letter code: Prepilin leader peptidase/N-methyltransferase (279 aa).

Topologically, residues 1–16 are periplasmic; that stretch reads MDDLREFAQLFPAWWF. The helical transmembrane segment at 17–35 threads the bilayer; that stretch reads GALGVLGLIVGSFLNVVIY. At 36–104 the chain is on the cytoplasmic side; it reads RLPIMLERRW…RSRCCHQSVS (69 aa). A helical membrane pass occupies residues 105 to 123; sequence VQYPLVEVITMLAFLAAGL. The Periplasmic portion of the chain corresponds to 124–130; sequence LWLPGMA. Residues 131–149 traverse the membrane as a helical segment; it reads LWGALILLSFLLVLTVIDI. Over 150-163 the chain is Cytoplasmic; that stretch reads KTLLLPDELTLSLL. A helical transmembrane segment spans residues 164-182; it reads WMGLLFNLSGTFVSLNDAV. Over 183-185 the chain is Periplasmic; it reads VGA. A helical membrane pass occupies residues 186 to 204; that stretch reads MAGYLSLWLLYWAFKYATG. Residues 205 to 214 lie on the Cytoplasmic side of the membrane; the sequence is KEALGYGDFK. A helical membrane pass occupies residues 215-233; it reads LLAALGAWLGWQALPNLVL. Residues 234-236 lie on the Periplasmic side of the membrane; the sequence is VAA. A helical transmembrane segment spans residues 237–254; the sequence is LSGLVVTLIWRGLRKEDT. Topologically, residues 255–257 are cytoplasmic; that stretch reads AKP. The chain crosses the membrane as a helical span at residues 258–276; the sequence is LAFGPWLAIGGVFGMIMNG. At 277–279 the chain is on the periplasmic side; sequence FNL.

This sequence belongs to the peptidase A24 family.

Its subcellular location is the cell inner membrane. It catalyses the reaction Typically cleaves a -Gly-|-Phe- bond to release an N-terminal, basic peptide of 5-8 residues from type IV prepilin, and then N-methylates the new N-terminal amino group, the methyl donor being S-adenosyl-L-methionine.. Its function is as follows. Plays a role in type II pseudopili formation by proteolytically removing the leader sequence from substrate proteins and subsequently monomethylating the alpha-amino group of the newly exposed N-terminal phenylalanine. Substrates include proteins required for biogenesis of the type II general secretory apparatus. This chain is Prepilin leader peptidase/N-methyltransferase (outO), found in Pectobacterium carotovorum subsp. carotovorum (Erwinia carotovora subsp. carotovora).